Consider the following 281-residue polypeptide: NADPH-dependent 7-cyano-7-deazaguanine reductase (281 aa).

Residue 88–90 (VES) participates in substrate binding. 90 to 91 (SK) is a binding site for NADPH. Residue Cys-189 is the Thioimide intermediate of the active site. Asp-196 acts as the Proton donor in catalysis. Residue 228–229 (HE) coordinates substrate. 257–258 (RG) is a binding site for NADPH.

The protein belongs to the GTP cyclohydrolase I family. QueF type 2 subfamily. Homodimer.

Its subcellular location is the cytoplasm. The enzyme catalyses 7-aminomethyl-7-carbaguanine + 2 NADP(+) = 7-cyano-7-deazaguanine + 2 NADPH + 3 H(+). The protein operates within tRNA modification; tRNA-queuosine biosynthesis. In terms of biological role, catalyzes the NADPH-dependent reduction of 7-cyano-7-deazaguanine (preQ0) to 7-aminomethyl-7-deazaguanine (preQ1). This Cronobacter sakazakii (strain ATCC BAA-894) (Enterobacter sakazakii) protein is NADPH-dependent 7-cyano-7-deazaguanine reductase.